We begin with the raw amino-acid sequence, 162 residues long: NADH-quinone oxidoreductase subunit I (162 aa).

4Fe-4S ferredoxin-type domains are found at residues 54 to 83 and 93 to 122; these read RRYE…INST and SSYE…ETNI. [4Fe-4S] cluster-binding residues include Cys63, Cys66, Cys69, Cys73, Cys102, Cys105, Cys108, and Cys112.

It belongs to the complex I 23 kDa subunit family. In terms of assembly, NDH-1 is composed of 14 different subunits. Subunits NuoA, H, J, K, L, M, N constitute the membrane sector of the complex. [4Fe-4S] cluster is required as a cofactor.

The protein localises to the cell inner membrane. It carries out the reaction a quinone + NADH + 5 H(+)(in) = a quinol + NAD(+) + 4 H(+)(out). In terms of biological role, NDH-1 shuttles electrons from NADH, via FMN and iron-sulfur (Fe-S) centers, to quinones in the respiratory chain. The immediate electron acceptor for the enzyme in this species is believed to be ubiquinone. Couples the redox reaction to proton translocation (for every two electrons transferred, four hydrogen ions are translocated across the cytoplasmic membrane), and thus conserves the redox energy in a proton gradient. The chain is NADH-quinone oxidoreductase subunit I from Francisella tularensis subsp. holarctica (strain FTNF002-00 / FTA).